The following is a 393-amino-acid chain: MPLSAGSLRRRPKFAAPLLSPACLHRLSVPGEFAARLDDDDAAGVGEEEEEESGRRAAAVLVVGPLGKVWRVELRRSPAGDGEAWLGGGWSELAAAHGLGEGWGVVLRLERRGVASLRVFDPGFCLARFCTPHAGMRTKDRPRFIKLLQQEDLEKMKIPEKFVQQHLTETYTNNHQNAIIVCPLGKFWRVELQREQPDVLLRDGWAPFLAAHDLSEGNILLFRYEGNMVFTVEVFLQNGCLKEYKTAALYLTDGTEGPSNAPQQSAAKVGVSPVKRKRTRRIEGTCLEGPNRKSRASPISVKVEPHKKHVSIVSQNSFTKEMTAYSIHSLLSVRGTFCSQIGLLEACAITLKISMKKKGSWRVAFKTANTYGYINGPGWRKFCLENELEVQRR.

3 DNA-binding regions (TF-B3) span residues 27–123 (LSVP…FDPG), 141–238 (RPRF…FLQN), and 316–393 (NSFT…VQRR).

The protein localises to the nucleus. In Oryza sativa subsp. japonica (Rice), this protein is Putative B3 domain-containing protein Os06g0632500.